The primary structure comprises 294 residues: Probable 2-(5''-triphosphoribosyl)-3'-dephosphocoenzyme-A synthase (294 aa).

Belongs to the CitG/MdcB family.

The enzyme catalyses 3'-dephospho-CoA + ATP = 2'-(5''-triphospho-alpha-D-ribosyl)-3'-dephospho-CoA + adenine. The protein is Probable 2-(5''-triphosphoribosyl)-3'-dephosphocoenzyme-A synthase of Streptococcus pyogenes serotype M49 (strain NZ131).